Consider the following 157-residue polypeptide: Protein Smg (157 aa).

The protein belongs to the Smg family.

In Escherichia coli O7:K1 (strain IAI39 / ExPEC), this protein is Protein Smg.